We begin with the raw amino-acid sequence, 90 residues long: UPF0335 protein RPB_1426 (90 aa).

It belongs to the UPF0335 family.

The chain is UPF0335 protein RPB_1426 from Rhodopseudomonas palustris (strain HaA2).